The following is a 120-amino-acid chain: NAD(P)H-quinone oxidoreductase subunit 3, chloroplastic (120 aa).

Helical transmembrane passes span I9–G29, M64–M84, and V88–S108.

It belongs to the complex I subunit 3 family. As to quaternary structure, NDH is composed of at least 16 different subunits, 5 of which are encoded in the nucleus.

It localises to the plastid. The protein localises to the chloroplast thylakoid membrane. The enzyme catalyses a plastoquinone + NADH + (n+1) H(+)(in) = a plastoquinol + NAD(+) + n H(+)(out). The catalysed reaction is a plastoquinone + NADPH + (n+1) H(+)(in) = a plastoquinol + NADP(+) + n H(+)(out). Its function is as follows. NDH shuttles electrons from NAD(P)H:plastoquinone, via FMN and iron-sulfur (Fe-S) centers, to quinones in the photosynthetic chain and possibly in a chloroplast respiratory chain. The immediate electron acceptor for the enzyme in this species is believed to be plastoquinone. Couples the redox reaction to proton translocation, and thus conserves the redox energy in a proton gradient. This chain is NAD(P)H-quinone oxidoreductase subunit 3, chloroplastic, found in Amborella trichopoda.